The following is an 82-amino-acid chain: Sec-independent protein translocase protein TatA (82 aa).

A helical membrane pass occupies residues 1–21; the sequence is MGSFSIWHWLIVLLVVVMIFG. The disordered stretch occupies residues 39–82; that stretch reads FKDGMKDGSTTDAPAASSAPAAQVTGQPANSDKSTIDVEARQKS. A compositionally biased stretch (low complexity) spans 51-60; the sequence is APAASSAPAA. Over residues 62–71 the composition is skewed to polar residues; that stretch reads VTGQPANSDK. Residues 72-82 show a composition bias toward basic and acidic residues; the sequence is STIDVEARQKS.

It belongs to the TatA/E family. As to quaternary structure, the Tat system comprises two distinct complexes: a TatABC complex, containing multiple copies of TatA, TatB and TatC subunits, and a separate TatA complex, containing only TatA subunits. Substrates initially bind to the TatABC complex, which probably triggers association of the separate TatA complex to form the active translocon.

It localises to the cell inner membrane. Its function is as follows. Part of the twin-arginine translocation (Tat) system that transports large folded proteins containing a characteristic twin-arginine motif in their signal peptide across membranes. TatA could form the protein-conducting channel of the Tat system. The sequence is that of Sec-independent protein translocase protein TatA from Variovorax paradoxus (strain S110).